A 416-amino-acid chain; its full sequence is Argininosuccinate synthase (416 aa).

ATP-binding positions include 11–19 and Ala37; that span reads AYSGGLDTS. Tyr88 is an L-citrulline binding site. A phosphotyrosine mark is found at Tyr88 and Tyr114. 116-124 contributes to the ATP binding site; that stretch reads AHGATGKGN. L-aspartate contacts are provided by Thr120, Asn124, and Asp125. Asn124 is an L-citrulline binding site. L-citrulline is bound by residues Arg128, Ser181, Ser190, Glu271, and Tyr283. Ser181 carries the phosphoserine modification.

The protein belongs to the argininosuccinate synthase family. In terms of assembly, homotetramer.

Its subcellular location is the cytoplasm. It localises to the cytosol. The catalysed reaction is L-citrulline + L-aspartate + ATP = 2-(N(omega)-L-arginino)succinate + AMP + diphosphate + H(+). The protein operates within amino-acid biosynthesis; L-arginine biosynthesis; L-arginine from L-ornithine and carbamoyl phosphate: step 2/3. Its pathway is nitrogen metabolism; urea cycle; (N(omega)-L-arginino)succinate from L-aspartate and L-citrulline: step 1/1. Its function is as follows. One of the enzymes of the urea cycle, the metabolic pathway transforming neurotoxic amonia produced by protein catabolism into inocuous urea in the liver of ureotelic animals. Catalyzes the formation of arginosuccinate from aspartate, citrulline and ATP and together with ASL it is responsible for the biosynthesis of arginine in most body tissues. This chain is Argininosuccinate synthase, found in Gallus gallus (Chicken).